Here is a 972-residue protein sequence, read N- to C-terminus: N-alpha-acetyltransferase 25, NatB auxiliary subunit (972 aa).

TPR repeat units lie at residues 11-44 (NDRR…HKDL), 45-78 (HCAK…EPTD), 79-112 (DNSL…VPNS), and 114-146 (EYHS…VPKN).

The protein belongs to the MDM20/NAA25 family. Component of the N-terminal acetyltransferase B (NatB) complex which is composed of NAA20 and NAA25.

Its subcellular location is the cytoplasm. In terms of biological role, non-catalytic subunit of the NatB complex which catalyzes acetylation of the N-terminal methionine residues of peptides beginning with Met-Asp, Met-Glu, Met-Asn and Met-Gln. May play a role in normal cell-cycle progression. In Homo sapiens (Human), this protein is N-alpha-acetyltransferase 25, NatB auxiliary subunit (NAA25).